Here is a 152-residue protein sequence, read N- to C-terminus: FMN reductase (NADH) RutF (152 aa).

This sequence belongs to the non-flavoprotein flavin reductase family. RutF subfamily.

The catalysed reaction is FMNH2 + NAD(+) = FMN + NADH + 2 H(+). Catalyzes the reduction of FMN to FMNH2 which is used to reduce pyrimidine by RutA via the Rut pathway. This is FMN reductase (NADH) RutF from Shigella dysenteriae serotype 1 (strain Sd197).